Reading from the N-terminus, the 446-residue chain is Exodeoxyribonuclease 7 large subunit (446 aa).

It belongs to the XseA family. As to quaternary structure, heterooligomer composed of large and small subunits.

It localises to the cytoplasm. The enzyme catalyses Exonucleolytic cleavage in either 5'- to 3'- or 3'- to 5'-direction to yield nucleoside 5'-phosphates.. Bidirectionally degrades single-stranded DNA into large acid-insoluble oligonucleotides, which are then degraded further into small acid-soluble oligonucleotides. The chain is Exodeoxyribonuclease 7 large subunit from Streptococcus pyogenes serotype M49 (strain NZ131).